A 208-amino-acid polypeptide reads, in one-letter code: N-(5'-phosphoribosyl)anthranilate isomerase (208 aa).

It belongs to the TrpF family.

It catalyses the reaction N-(5-phospho-beta-D-ribosyl)anthranilate = 1-(2-carboxyphenylamino)-1-deoxy-D-ribulose 5-phosphate. The protein operates within amino-acid biosynthesis; L-tryptophan biosynthesis; L-tryptophan from chorismate: step 3/5. The sequence is that of N-(5'-phosphoribosyl)anthranilate isomerase from Methanothrix thermoacetophila (strain DSM 6194 / JCM 14653 / NBRC 101360 / PT) (Methanosaeta thermophila).